The primary structure comprises 268 residues: Hydroxyethylthiazole kinase (268 aa).

Met45 is a substrate binding site. ATP contacts are provided by Arg121 and Thr167. Gly194 is a substrate binding site.

The protein belongs to the Thz kinase family. It depends on Mg(2+) as a cofactor.

It catalyses the reaction 5-(2-hydroxyethyl)-4-methylthiazole + ATP = 4-methyl-5-(2-phosphooxyethyl)-thiazole + ADP + H(+). Its pathway is cofactor biosynthesis; thiamine diphosphate biosynthesis; 4-methyl-5-(2-phosphoethyl)-thiazole from 5-(2-hydroxyethyl)-4-methylthiazole: step 1/1. Functionally, catalyzes the phosphorylation of the hydroxyl group of 4-methyl-5-beta-hydroxyethylthiazole (THZ). This is Hydroxyethylthiazole kinase from Bacillus thuringiensis (strain Al Hakam).